The primary structure comprises 124 residues: Phosphoribosyl-AMP cyclohydrolase (124 aa).

Asp82 provides a ligand contact to Mg(2+). Cys83 is a Zn(2+) binding site. The Mg(2+) site is built by Asp84 and Asp86. Zn(2+)-binding residues include Cys99 and Cys106.

It belongs to the PRA-CH family. As to quaternary structure, homodimer. Mg(2+) serves as cofactor. It depends on Zn(2+) as a cofactor.

It is found in the cytoplasm. The catalysed reaction is 1-(5-phospho-beta-D-ribosyl)-5'-AMP + H2O = 1-(5-phospho-beta-D-ribosyl)-5-[(5-phospho-beta-D-ribosylamino)methylideneamino]imidazole-4-carboxamide. The protein operates within amino-acid biosynthesis; L-histidine biosynthesis; L-histidine from 5-phospho-alpha-D-ribose 1-diphosphate: step 3/9. Functionally, catalyzes the hydrolysis of the adenine ring of phosphoribosyl-AMP. The protein is Phosphoribosyl-AMP cyclohydrolase of Zymomonas mobilis subsp. mobilis (strain ATCC 31821 / ZM4 / CP4).